Here is a 276-residue protein sequence, read N- to C-terminus: Undecaprenyl-diphosphatase (276 aa).

6 helical membrane-spanning segments follow: residues 43-63 (RAMA…VWEF), 85-105 (GNLL…ADLI), 109-129 (LFNP…MLWA), 183-203 (AATE…AVYS), 214-234 (ADLP…MIAV), and 249-269 (FAWY…FGWV).

It belongs to the UppP family.

The protein localises to the cell inner membrane. The enzyme catalyses di-trans,octa-cis-undecaprenyl diphosphate + H2O = di-trans,octa-cis-undecaprenyl phosphate + phosphate + H(+). In terms of biological role, catalyzes the dephosphorylation of undecaprenyl diphosphate (UPP). Confers resistance to bacitracin. This Pseudomonas putida (strain GB-1) protein is Undecaprenyl-diphosphatase.